Reading from the N-terminus, the 188-residue chain is Probable manganese efflux pump MntP (188 aa).

Transmembrane regions (helical) follow at residues 3–23, 66–86, 106–128, 143–163, and 168–188; these read ITAT…ASIG, LEWN…RMII, WLLV…GLAF, ATLI…SIIG, and ILGG…HFHG.

This sequence belongs to the MntP (TC 9.B.29) family.

It is found in the cell inner membrane. Its function is as follows. Probably functions as a manganese efflux pump. In Shigella flexneri serotype 5b (strain 8401), this protein is Probable manganese efflux pump MntP.